A 112-amino-acid polypeptide reads, in one-letter code: Ribosome-binding factor A (112 aa).

Belongs to the RbfA family. In terms of assembly, monomer. Binds 30S ribosomal subunits, but not 50S ribosomal subunits or 70S ribosomes.

It localises to the cytoplasm. Its function is as follows. One of several proteins that assist in the late maturation steps of the functional core of the 30S ribosomal subunit. Associates with free 30S ribosomal subunits (but not with 30S subunits that are part of 70S ribosomes or polysomes). Required for efficient processing of 16S rRNA. May interact with the 5'-terminal helix region of 16S rRNA. The polypeptide is Ribosome-binding factor A (Mycoplasma genitalium (strain ATCC 33530 / DSM 19775 / NCTC 10195 / G37) (Mycoplasmoides genitalium)).